Consider the following 322-residue polypeptide: Deoxyhypusine hydroxylase (322 aa).

HEAT-like PBS-type repeat units lie at residues 76–102 (LKHE…VLAD) and 109–135 (VRHE…YFKE). Residues H78, E79, H111, E112, H236, E237, H269, and E270 each coordinate Fe cation. One copy of the HEAT-like PBS-type 3 repeat lies at 267–293 (VRHEAAEALGSIATDDVLPVLKEHLKD).

This sequence belongs to the deoxyhypusine hydroxylase family. The cofactor is Fe(2+).

The protein resides in the cytoplasm. It is found in the nucleus. The catalysed reaction is [eIF5A protein]-deoxyhypusine + AH2 + O2 = [eIF5A protein]-hypusine + A + H2O. Its pathway is protein modification; eIF5A hypusination. In terms of biological role, catalyzes the hydroxylation of the N(6)-(4-aminobutyl)-L-lysine intermediate to form hypusine, an essential post-translational modification only found in mature eIF-5A factor. The protein is Deoxyhypusine hydroxylase of Kluyveromyces lactis (strain ATCC 8585 / CBS 2359 / DSM 70799 / NBRC 1267 / NRRL Y-1140 / WM37) (Yeast).